We begin with the raw amino-acid sequence, 496 residues long: Fusarielin biosynthesis cluster transcription factor FSL7 (496 aa).

A DNA-binding region (zn(2)-C6 fungal-type) is located at residues 16 to 46; sequence CDRCHELKIRCTRTGGTESRCDRCEKNDIDC. Disordered regions lie at residues 57–102, 189–224, 281–307, 348–379, and 444–470; these read PKSQ…SINS, RSIN…EDQM, ANHT…QSRS, GSTS…KPRT, and MTRE…AQAA. Composition is skewed to polar residues over residues 65 to 89 and 207 to 218; these read GPNT…QEQM and ELQSTQSASGSP. A compositionally biased stretch (low complexity) spans 281 to 294; sequence ANHTSSSSSSNSTT. Positions 355-379 are enriched in polar residues; that stretch reads YNDTTAHPSSASLPSQTGGPTKPRT. The segment covering 444–460 has biased composition (basic and acidic residues); it reads MTREQHVSTGHGPDRHT.

It localises to the nucleus. Its function is as follows. Transcription regulator that specifically up-regulates the gene cluster that mediates the biosynthesis of fusarielins F, G and H, decaketide compounds with 5 methylations and a decaline core that act as mycoestrogens as they stimulate growth of MCF-7 breast cancer cells. Probably binds the 5'-CGGNNNCCG-3' motif present in the promoter of all the cluster genes. The chain is Fusarielin biosynthesis cluster transcription factor FSL7 from Gibberella zeae (strain ATCC MYA-4620 / CBS 123657 / FGSC 9075 / NRRL 31084 / PH-1) (Wheat head blight fungus).